A 197-amino-acid polypeptide reads, in one-letter code: Putative sulfur carrier protein aq_1421 (197 aa).

Cys17 acts as the Cysteine persulfide intermediate in catalysis.

Belongs to the sulfur carrier protein TusA family.

The chain is Putative sulfur carrier protein aq_1421 from Aquifex aeolicus (strain VF5).